Here is a 156-residue protein sequence, read N- to C-terminus: Small ribosomal subunit protein uS7 (156 aa).

The protein belongs to the universal ribosomal protein uS7 family. Part of the 30S ribosomal subunit. Contacts proteins S9 and S11.

In terms of biological role, one of the primary rRNA binding proteins, it binds directly to 16S rRNA where it nucleates assembly of the head domain of the 30S subunit. Is located at the subunit interface close to the decoding center, probably blocks exit of the E-site tRNA. The protein is Small ribosomal subunit protein uS7 of Salinispora tropica (strain ATCC BAA-916 / DSM 44818 / JCM 13857 / NBRC 105044 / CNB-440).